A 200-amino-acid polypeptide reads, in one-letter code: MEETKQSLIASLPSAPRKPKSKVERVVRKTFKGTAHLSNLLPTGSVMSFQIMCPVLTHQGQCPTITSRWLTCFLVSLCAISCFLFSFTDSIRDPNGKVRYGLATWSGLLVMDGSITLTEEEKEKYKLKILDFIHAIMSMLVFFAVSMFDQNVTRCLFPVPSEETKEILTSLPFVIGVICGAFFLAFPTRRHGIGSPLTKE.

The next 4 membrane-spanning stretches (helical) occupy residues 37-57, 69-89, 129-149, and 167-187; these read LSNLLPTGSVMSFQIMCPVLT, WLTCFLVSLCAISCFLFSFTD, ILDFIHAIMSMLVFFAVSMFD, and ILTSLPFVIGVICGAFFLAFP.

It belongs to the plant DMP1 protein family. Expressed in leaves, stems, flowers, siliques and roots, especially in the vasculature.

The protein localises to the endoplasmic reticulum membrane. Its function is as follows. Involved in membrane remodeling. The chain is Protein DMP7 from Arabidopsis thaliana (Mouse-ear cress).